We begin with the raw amino-acid sequence, 816 residues long: Neuronal PAS domain-containing protein 2 (816 aa).

The span at 1 to 10 (MDEDEKDRAK) shows a compositional bias: basic and acidic residues. Positions 1 to 21 (MDEDEKDRAKRASRNKSEKKR) are disordered. The sufficient for heterodimer formation with BMAL1, E-box binding and for the effect of NADPH stretch occupies residues 1-61 (MDEDEKDRAK…VIGFLQKHNE (61 aa)). A bHLH domain is found at 9-59 (AKRASRNKSEKKRRDQFNVLIKELSSMLPGNTRKMDKTTVLEKVIGFLQKH). The PAS 1 domain maps to 82–152 (NEEFTQLMLE…KILSSHMLVT (71 aa)). H119 and H171 together coordinate heme b. One can recognise a PAS 2 domain in the interval 237–307 (FLKEMCVADE…RCHQHLMQFG (71 aa)). The PAC domain occupies 311–354 (SCCYRFLTKGQQWIWLQTHYYITYHQWNSKPEFIVCTHSVVSYA). 4 disordered regions span residues 364–431 (LALE…STPT), 610–639 (ISAQ…SQFS), 685–705 (QPMM…RTGR), and 742–816 (PSFP…LSES). Low complexity predominate over residues 400-413 (SGLPSSPSPSASSR). The segment covering 420–431 (HTAMSEPTSTPT) has biased composition (polar residues). A compositionally biased stretch (low complexity) spans 623 to 639 (LLPASGRSLSSLPSQFS). A compositionally biased stretch (low complexity) spans 745-759 (PASRPSPLQPAQAQQ). The segment covering 780 to 789 (LLSTFSQQPG) has biased composition (polar residues). Residues 806–816 (PSRRVSRLSES) show a composition bias toward basic residues.

As to quaternary structure, component of the circadian clock oscillator which includes the CRY proteins, CLOCK or NPAS2, BMAL1 or BMAL2, CSNK1D and/or CSNK1E, TIMELESS and the PER proteins. Efficient DNA binding requires dimerization with another bHLH protein. Interacts with NCOA3, KAT2B and CREBBP. Forms a heterodimer with BMAL1 and this heterodimerization is required for E-box-dependent transactivation. Interacts with EP300. Heme serves as cofactor. Expressed in the retinal ganglion cells (at protein level). Expressed in the hypothalamic suprachiasmatic nuclei (SCN) of the brain. Also found in spinal cord, and to a lesser extent in colon, small intestine and uterus. Exhibits a diurnal variation in its expression in the brain.

It is found in the nucleus. Carbon monoxide (CO) and the redox state of the cell can modulate the transcriptional activity of the NPAS2-BMAL1 heterodimer. NADH and NADPH enhance the DNA-binding activity of the heterodimer whereas CO binds the heme group in NPAS2 and inhibits the DNA-binding activity of the heterodimer. Functionally, transcriptional activator which forms a core component of the circadian clock. The circadian clock, an internal time-keeping system, regulates various physiological processes through the generation of approximately 24 hour circadian rhythms in gene expression, which are translated into rhythms in metabolism and behavior. It is derived from the Latin roots 'circa' (about) and 'diem' (day) and acts as an important regulator of a wide array of physiological functions including metabolism, sleep, body temperature, blood pressure, endocrine, immune, cardiovascular, and renal function. Consists of two major components: the central clock, residing in the suprachiasmatic nucleus (SCN) of the brain, and the peripheral clocks that are present in nearly every tissue and organ system. Both the central and peripheral clocks can be reset by environmental cues, also known as Zeitgebers (German for 'timegivers'). The predominant Zeitgeber for the central clock is light, which is sensed by retina and signals directly to the SCN. The central clock entrains the peripheral clocks through neuronal and hormonal signals, body temperature and feeding-related cues, aligning all clocks with the external light/dark cycle. Circadian rhythms allow an organism to achieve temporal homeostasis with its environment at the molecular level by regulating gene expression to create a peak of protein expression once every 24 hours to control when a particular physiological process is most active with respect to the solar day. Transcription and translation of core clock components (CLOCK, NPAS2, BMAL1, BMAL2, PER1, PER2, PER3, CRY1 and CRY2) plays a critical role in rhythm generation, whereas delays imposed by post-translational modifications (PTMs) are important for determining the period (tau) of the rhythms (tau refers to the period of a rhythm and is the length, in time, of one complete cycle). A diurnal rhythm is synchronized with the day/night cycle, while the ultradian and infradian rhythms have a period shorter and longer than 24 hours, respectively. Disruptions in the circadian rhythms contribute to the pathology of cardiovascular diseases, cancer, metabolic syndromes and aging. A transcription/translation feedback loop (TTFL) forms the core of the molecular circadian clock mechanism. Transcription factors, CLOCK or NPAS2 and BMAL1 or BMAL2, form the positive limb of the feedback loop, act in the form of a heterodimer and activate the transcription of core clock genes and clock-controlled genes (involved in key metabolic processes), harboring E-box elements (5'-CACGTG-3') within their promoters. The core clock genes: PER1/2/3 and CRY1/2 which are transcriptional repressors form the negative limb of the feedback loop and interact with the CLOCK|NPAS2-BMAL1|BMAL2 heterodimer inhibiting its activity and thereby negatively regulating their own expression. This heterodimer also activates nuclear receptors NR1D1/2 and RORA/B/G, which form a second feedback loop and which activate and repress BMAL1 transcription, respectively. The NPAS2-BMAL1 heterodimer positively regulates the expression of MAOA, F7 and LDHA and modulates the circadian rhythm of daytime contrast sensitivity by regulating the rhythmic expression of adenylate cyclase type 1 (ADCY1) in the retina. NPAS2 plays an important role in sleep homeostasis and in maintaining circadian behaviors in normal light/dark and feeding conditions and in the effective synchronization of feeding behavior with scheduled food availability. Regulates the gene transcription of key metabolic pathways in the liver and is involved in DNA damage response by regulating several cell cycle and DNA repair genes. Controls the circadian rhythm of NR0B2 expression by binding rhythmically to its promoter. Mediates the diurnal variation in the expression of GABARA1 receptor in the brain and contributes to the regulation of anxiety-like behaviors and GABAergic neurotransmission in the ventral striatum. This is Neuronal PAS domain-containing protein 2 (Npas2) from Mus musculus (Mouse).